Here is a 64-residue protein sequence, read N- to C-terminus: Conotoxin Pu3.5 (64 aa).

Residues 1-16 (LGVLLTICLLLFPLTA) form the signal peptide. Residues 17–49 (VPLDGDQPADQPAGRMQDDISSEQHPFFDPVKR) constitute a propeptide that is removed on maturation. Disulfide bonds link Cys50–Cys63, Cys51–Cys58, and Cys54–Cys62.

Belongs to the conotoxin M superfamily. Expressed by the venom duct.

Its subcellular location is the secreted. This chain is Conotoxin Pu3.5, found in Conus pulicarius (Flea-bitten cone).